We begin with the raw amino-acid sequence, 83 residues long: Cytochrome b559 subunit alpha (83 aa).

A helical membrane pass occupies residues 21-35 (VIHSITIPSLFIAGW). Histidine 23 contacts heme.

Belongs to the PsbE/PsbF family. In terms of assembly, heterodimer of an alpha subunit and a beta subunit. PSII is composed of 1 copy each of membrane proteins PsbA, PsbB, PsbC, PsbD, PsbE, PsbF, PsbH, PsbI, PsbJ, PsbK, PsbL, PsbM, PsbT, PsbX, PsbY, PsbZ, Psb30/Ycf12, at least 3 peripheral proteins of the oxygen-evolving complex and a large number of cofactors. It forms dimeric complexes. It depends on heme b as a cofactor.

It localises to the plastid. It is found in the chloroplast thylakoid membrane. This b-type cytochrome is tightly associated with the reaction center of photosystem II (PSII). PSII is a light-driven water:plastoquinone oxidoreductase that uses light energy to abstract electrons from H(2)O, generating O(2) and a proton gradient subsequently used for ATP formation. It consists of a core antenna complex that captures photons, and an electron transfer chain that converts photonic excitation into a charge separation. The protein is Cytochrome b559 subunit alpha of Huperzia lucidula (Shining clubmoss).